The sequence spans 3416 residues: Genome polyprotein (3416 aa).

The disordered stretch occupies residues 1 to 34 (MAKGAVLKGKGGGPPRRVPKETAKKTRQGPGRLP). Residues 1–99 (MAKGAVLKGK…NRRRGKRRST (99 aa)) lie on the Cytoplasmic side of the membrane. Residues 97-117 (RSTTGLLTSILLACLATLVIS) constitute a propeptide, ER anchor for the capsid protein C, removed in mature form by serine protease NS3. A helical membrane pass occupies residues 100–120 (TGLLTSILLACLATLVISATI). Topologically, residues 121-243 (RRERTGDMVI…HLTRVEGWVW (123 aa)) are extracellular. The N-linked (GlcNAc...) asparagine; by host glycan is linked to N145. A helical transmembrane segment spans residues 244 to 261 (KNKLLTMAFCAVVWMVTD). Position 262 (S262) is a topological domain, cytoplasmic. A helical transmembrane segment spans residues 263–281 (LPTRFIVITVALCLAPTYA). Residues 282–728 (TRCTHLQNRD…HTAFGAAFNT (447 aa)) are Extracellular-facing. 6 disulfide bridges follow: C284–C311, C341–C397, C341–C402, C355–C386, C373–C397, and C373–C402. The segment at 379-392 (DRGWGNHCGLFGKG) is fusion peptide. An N-linked (GlcNAc...) asparagine; by host glycan is attached at N435. Cystine bridges form between C467–C571 and C588–C619. Residues 729 to 749 (IFGGVGFLPRILLGVALAWLG) form a helical membrane-spanning segment. The Cytoplasmic segment spans residues 750–756 (LNSRNPT). Residues 757 to 777 (LSVGFLITGGLVLTMTLGVGA) traverse the membrane as a helical segment. Residues 778–1134 (DMGCAIDANR…RSMVLADNGA (357 aa)) are Extracellular-facing. 6 disulfide bridges follow: C781–C792, C832–C922, C957–C1002, C1059–C1108, C1070–C1092, and C1091–C1095. N-linked (GlcNAc...) asparagine; by host glycans are attached at residues N862, N985, and N1001. The chain crosses the membrane as a helical span at residues 1135 to 1155 (MLSEGGVPGIVAVFVVLELVI). Residues 1156 to 1162 (RRRPTTG) lie on the Cytoplasmic side of the membrane. A helical membrane pass occupies residues 1163–1183 (TSVVWCGVVVLGLVVTGLVTI). The Lumenal portion of the chain corresponds to 1184 to 1189 (EGLCRY). Residues 1190–1210 (VVAVGILMSMELGPEIVALVL) form a helical membrane-spanning segment. The Cytoplasmic segment spans residues 1211–1235 (LQAVFDMRTGLLVAFAVKRAYTTRE). Residues 1236-1256 (AVVTYFLLLVLELGFPEASLS) form a helical membrane-spanning segment. The Lumenal portion of the chain corresponds to 1257–1295 (NIWKWADSLAMGTLILQACSQEGRARVGYLLAAMMTQKD). The chain crosses the membrane as a helical span at residues 1296 to 1316 (MAIIHTGLTIFLSAATAMAVW). The Cytoplasmic portion of the chain corresponds to 1317–1361 (SMIKGQRDQKGLSWATPLVGLFGGEGVGLRLLAFRRLAERRNRRS). Residues 1362-1379 (FSEPLTVVGVMLTVASGM) traverse the membrane as a helical segment. Over 1380 to 1384 (VRHTS) the chain is Lumenal. The helical transmembrane segment at 1385 to 1405 (QEALCALVAGAFLLLMMVLGT) threads the bilayer. Residues 1406 to 1458 (RKMQLIAEWCGEVEWNPDLVNEGGEVNLKVRQDAMGNLHLTEVEKEERAMALW) lie on the Cytoplasmic side of the membrane. The interacts with and activates NS3 protease stretch occupies residues 1412 to 1451 (AEWCGEVEWNPDLVNEGGEVNLKVRQDAMGNLHLTEVEKE). The segment at residues 1459-1479 (LLAGLVASAFHWAGILIVLAI) is an intramembrane region (helical). Topologically, residues 1480 to 2162 (WTFFEMLSSG…RMAERDAPEA (683 aa)) are cytoplasmic. Positions 1492 to 1671 (SELVFSGQGT…EAEKSRPELP (180 aa)) constitute a Peptidase S7 domain. Catalysis depends on charge relay system; for serine protease NS3 activity residues H1545, D1569, and S1629. The 157-residue stretch at 1677 to 1833 (TGWMSKGQIT…ESNGAIMSEE (157 aa)) folds into the Helicase ATP-binding domain. 1690–1697 (MHPGSGKT) is an ATP binding site. The short motif at 1781–1784 (DEAH) is the DEAH box element. The Helicase C-terminal domain maps to 1844–2002 (GFDWITEYEG…TLRGPVATFY (159 aa)). Residue K1885 is modified to N6-acetyllysine; by host. Residues 2163–2183 (FLTIVEVAVLGVATLGILWCF) form a helical membrane-spanning segment. The Lumenal portion of the chain corresponds to 2184–2191 (VARTSVSR). The segment at residues 2192–2211 (MFLGTVVLFAALLLLWIGGV) is an intramembrane region (helical). Position 2212 (D2212) is a topological domain, lumenal. Residues 2213 to 2233 (YGYMAGIALIFYIFLTVLQPE) traverse the membrane as a helical segment. Residues 2234–2246 (PGKQRSSDDNRLA) lie on the Cytoplasmic side of the membrane. A helical membrane pass occupies residues 2247-2267 (YFLLGLLSLAGLVTANEMGML). Topologically, residues 2268–2301 (DKTKADLAGLMWHGEQRHPAWEEWTNVDIQPARS) are lumenal. Positions 2302–2322 (WGTYVLIVSLFTPYMLHQLQT) form an intramembrane region, helical. Topologically, residues 2323–2345 (KIQQLVNSSVASGAQAMRDLGGG) are lumenal. The helical intramembrane region spans 2346–2366 (TPFFGVAGHVIALGVTSLVGA). The Lumenal portion of the chain corresponds to 2367-2368 (TP). The chain crosses the membrane as a helical span at residues 2369-2389 (LSLGLGVALAAFHLAIVASGL). At 2390–2432 (EAELTQRAHRVFFSAMVKNPMVDGDVINPFPDGEPKPVLYERR) the chain is on the cytoplasmic side. The helical transmembrane segment at 2433–2453 (MSLILAIALCMVSVVLNRTAA) threads the bilayer. Residues 2454–2476 (SMTEAGAVGLAALGQLVHPETET) are Lumenal-facing. The helical transmembrane segment at 2477–2497 (LWTMPMACGMAGLVRGSFWGL) threads the bilayer. At 2498–3416 (LPMGHRLWLK…WDLKLESNII (919 aa)) the chain is on the cytoplasmic side. One can recognise an mRNA cap 0-1 NS5-type MT domain in the interval 2514–2778 (GGADGETLGD…EVDLGTGTRC (265 aa)). S2569 contacts S-adenosyl-L-methionine. At S2569 the chain carries Phosphoserine. K2574 acts as the For 2'-O-MTase activity in catalysis. 6 residues coordinate S-adenosyl-L-methionine: G2599, W2600, T2617, I2618, D2644, and V2645. The For 2'-O-MTase activity role is filled by D2659. I2660 serves as a coordination point for S-adenosyl-L-methionine. Active-site for 2'-O-MTase activity residues include K2696 and E2732. The tract at residues 2732–2736 (EMYFS) is interaction with host SCRIB. Residue Y2734 participates in S-adenosyl-L-methionine binding. 4 residues coordinate Zn(2+): E2952, H2956, C2961, and C2964. The RdRp catalytic domain occupies 3042 to 3191 (GLFYADDTAG…RPIDDRFGKA (150 aa)). H3226, C3242, and C3361 together coordinate Zn(2+).

In the N-terminal section; belongs to the class I-like SAM-binding methyltransferase superfamily. mRNA cap 0-1 NS5-type methyltransferase family. Homodimer. Interacts (via N-terminus) with host EXOC1 (via C-terminus); this interaction results in EXOC1 degradation through the proteasome degradation pathway. In terms of assembly, forms heterodimers with envelope protein E in the endoplasmic reticulum and Golgi. As to quaternary structure, homodimer; in the endoplasmic reticulum and Golgi. Interacts with protein prM. Interacts with non-structural protein 1. Homodimer; Homohexamer when secreted. Interacts with envelope protein E. In terms of assembly, interacts (via N-terminus) with serine protease NS3. As to quaternary structure, forms a heterodimer with serine protease NS3. May form homooligomers. Forms a heterodimer with NS2B. Interacts with NS4B. Interacts with unphosphorylated RNA-directed RNA polymerase NS5; this interaction stimulates RNA-directed RNA polymerase NS5 guanylyltransferase activity. In terms of assembly, interacts with serine protease NS3. As to quaternary structure, homodimer. Interacts with host STAT2; this interaction inhibits the phosphorylation of the latter, and, when all viral proteins are present (polyprotein), targets STAT2 for degradation. Interacts with serine protease NS3. In terms of processing, specific enzymatic cleavages in vivo yield mature proteins. Cleavages in the lumen of endoplasmic reticulum are performed by host signal peptidase, whereas cleavages in the cytoplasmic side are performed by serine protease NS3. Signal cleavage at the 2K-4B site requires a prior NS3 protease-mediated cleavage at the 4A-2K site. Cleaved in post-Golgi vesicles by a host furin, releasing the mature small envelope protein M, and peptide pr. This cleavage is incomplete as up to 30% of viral particles still carry uncleaved prM. Post-translationally, N-glycosylated. In terms of processing, N-glycosylated. The excreted form is glycosylated and this is required for efficient secretion of the protein from infected cells. Acetylated by host KAT5. Acetylation modulates NS3 RNA-binding and unwinding activities and plays an important positive role for viral replication. Post-translationally, phosphorylated on serines residues. This phosphorylation may trigger NS5 nuclear localization.

It localises to the virion. Its subcellular location is the host nucleus. The protein resides in the host cytoplasm. It is found in the host perinuclear region. The protein localises to the secreted. It localises to the virion membrane. Its subcellular location is the host endoplasmic reticulum membrane. It catalyses the reaction Selective hydrolysis of -Xaa-Xaa-|-Yaa- bonds in which each of the Xaa can be either Arg or Lys and Yaa can be either Ser or Ala.. The catalysed reaction is RNA(n) + a ribonucleoside 5'-triphosphate = RNA(n+1) + diphosphate. It carries out the reaction a ribonucleoside 5'-triphosphate + H2O = a ribonucleoside 5'-diphosphate + phosphate + H(+). The enzyme catalyses ATP + H2O = ADP + phosphate + H(+). It catalyses the reaction a 5'-end (5'-triphosphoguanosine)-ribonucleoside in mRNA + S-adenosyl-L-methionine = a 5'-end (N(7)-methyl 5'-triphosphoguanosine)-ribonucleoside in mRNA + S-adenosyl-L-homocysteine. The catalysed reaction is a 5'-end (N(7)-methyl 5'-triphosphoguanosine)-ribonucleoside in mRNA + S-adenosyl-L-methionine = a 5'-end (N(7)-methyl 5'-triphosphoguanosine)-(2'-O-methyl-ribonucleoside) in mRNA + S-adenosyl-L-homocysteine + H(+). Plays a role in virus budding by binding to the cell membrane and gathering the viral RNA into a nucleocapsid that forms the core of a mature virus particle. During virus entry, may induce genome penetration into the host cytoplasm after hemifusion induced by the surface proteins. Can migrate to the cell nucleus where it modulates host functions. Functionally, inhibits RNA silencing by interfering with host Dicer. Its function is as follows. Prevents premature fusion activity of envelope proteins in trans-Golgi by binding to envelope protein E at pH6.0. After virion release in extracellular space, gets dissociated from E dimers. In terms of biological role, acts as a chaperone for envelope protein E during intracellular virion assembly by masking and inactivating envelope protein E fusion peptide. prM is the only viral peptide matured by host furin in the trans-Golgi network probably to avoid catastrophic activation of the viral fusion activity in acidic Golgi compartment prior to virion release. prM-E cleavage is inefficient, and many virions are only partially matured. These uncleaved prM would play a role in immune evasion. May play a role in virus budding. Exerts cytotoxic effects by activating a mitochondrial apoptotic pathway through M ectodomain. May display a viroporin activity. Functionally, binds to host cell surface receptor and mediates fusion between viral and cellular membranes. Envelope protein is synthesized in the endoplasmic reticulum in the form of heterodimer with protein prM. They play a role in virion budding in the ER, and the newly formed immature particle is covered with 60 spikes composed of heterodimer between precursor prM and envelope protein E. The virion is transported to the Golgi apparatus where the low pH causes dissociation of PrM-E heterodimers and formation of E homodimers. prM-E cleavage is inefficient, and many virions are only partially matured. These uncleaved prM would play a role in immune evasion. Its function is as follows. Involved in immune evasion, pathogenesis and viral replication. Once cleaved off the polyprotein, is targeted to three destinations: the viral replication cycle, the plasma membrane and the extracellular compartment. Essential for viral replication. Required for formation of the replication complex and recruitment of other non-structural proteins to the ER-derived membrane structures. Excreted as a hexameric lipoparticle that plays a role against host immune response. Antagonizing the complement function. Binds to the host macrophages and dendritic cells. Inhibits signal transduction originating from Toll-like receptor 3 (TLR3). In terms of biological role, component of the viral RNA replication complex that functions in virion assembly and antagonizes the host immune response. Required cofactor for the serine protease function of NS3. May have membrane-destabilizing activity and form viroporins. Functionally, displays three enzymatic activities: serine protease, NTPase and RNA helicase. NS3 serine protease, in association with NS2B, performs its autocleavage and cleaves the polyprotein at dibasic sites in the cytoplasm: C-prM, NS2A-NS2B, NS2B-NS3, NS3-NS4A, NS4A-2K and NS4B-NS5. NS3 RNA helicase binds RNA and unwinds dsRNA in the 3' to 5' direction. Its function is as follows. Regulates the ATPase activity of the NS3 helicase activity. NS4A allows NS3 helicase to conserve energy during unwinding. In terms of biological role, functions as a signal peptide for NS4B and is required for the interferon antagonism activity of the latter. Induces the formation of ER-derived membrane vesicles where the viral replication takes place. Inhibits interferon (IFN)-induced host STAT1 phosphorylation and nuclear translocation, thereby preventing the establishment of cellular antiviral state by blocking the IFN-alpha/beta pathway. Inhibits STAT2 translocation in the nucleus after IFN-alpha treatment. Functionally, replicates the viral (+) and (-) RNA genome, and performs the capping of genomes in the cytoplasm. NS5 methylates viral RNA cap at guanine N-7 and ribose 2'-O positions. Besides its role in RNA genome replication, also prevents the establishment of cellular antiviral state by blocking the interferon-alpha/beta (IFN-alpha/beta) signaling pathway. Inhibits host TYK2 and STAT2 phosphorylation, thereby preventing activation of JAK-STAT signaling pathway. This is Genome polyprotein from Homo sapiens (Human).